The primary structure comprises 426 residues: Serine hydroxymethyltransferase (426 aa).

Residues leucine 121 and 125-127 each bind (6S)-5,6,7,8-tetrahydrofolate; that span reads GHL. Lysine 230 is subject to N6-(pyridoxal phosphate)lysine. Residue 354–356 participates in (6S)-5,6,7,8-tetrahydrofolate binding; it reads SPF.

Belongs to the SHMT family. In terms of assembly, homodimer. The cofactor is pyridoxal 5'-phosphate.

The protein localises to the cytoplasm. The enzyme catalyses (6R)-5,10-methylene-5,6,7,8-tetrahydrofolate + glycine + H2O = (6S)-5,6,7,8-tetrahydrofolate + L-serine. It participates in one-carbon metabolism; tetrahydrofolate interconversion. Its pathway is amino-acid biosynthesis; glycine biosynthesis; glycine from L-serine: step 1/1. In terms of biological role, catalyzes the reversible interconversion of serine and glycine with tetrahydrofolate (THF) serving as the one-carbon carrier. This reaction serves as the major source of one-carbon groups required for the biosynthesis of purines, thymidylate, methionine, and other important biomolecules. Also exhibits THF-independent aldolase activity toward beta-hydroxyamino acids, producing glycine and aldehydes, via a retro-aldol mechanism. The polypeptide is Serine hydroxymethyltransferase (Acaryochloris marina (strain MBIC 11017)).